The chain runs to 268 residues: UPF0294 protein ETA_26410 (268 aa).

The protein belongs to the UPF0294 family.

The protein localises to the cytoplasm. This chain is UPF0294 protein ETA_26410, found in Erwinia tasmaniensis (strain DSM 17950 / CFBP 7177 / CIP 109463 / NCPPB 4357 / Et1/99).